Here is a 407-residue protein sequence, read N- to C-terminus: MAANDAELHDSFSGKSQPGENRKASRSSKHCSRSRSRSTERKRKSGDKRHKRSHSRSKEARKKDSEKALKCQSGSEERLEFSDKGRDRLSEDTEERHRRKDKKTSRPRSHSRSRSKEKRHHNRNWDKRRSRSRSRSRDKKRRARSRSNSRSKHRHRSRSRSKSREKKKRIEKSRKKSRSPSISPVTFRGRNTAMDAQEALARRLERAKKLQEQKEKDMLEKWQHQEKAAASTPQCDPAAAAPSPALNVAALLASGTQVTPQIAMAAQMAALQAKTLAETGIAVPSYYNPSAVNPMKFAEQEKKRKMLWQGKKEGDNKSQTAELWEKLNFGNKDQNVKFRKLMGIKGEEEAASSAAVNEDGLKTLQQQEEMFRNLDVQYEMARSQTHTQRGMGLGFSSSFSSRGMDAV.

Residues 1–12 show a composition bias toward basic and acidic residues; it reads MAANDAELHDSF. Residues 1–239 form a disordered region; it reads MAANDAELHD…ASTPQCDPAA (239 aa). The span at 24 to 55 shows a compositional bias: basic residues; the sequence is ASRSSKHCSRSRSRSTERKRKSGDKRHKRSHS. Basic and acidic residues predominate over residues 56–96; sequence RSKEARKKDSEKALKCQSGSEERLEFSDKGRDRLSEDTEER. Basic residues predominate over residues 97–178; sequence HRRKDKKTSR…RIEKSRKKSR (82 aa). The stretch at 191–221 forms a coiled coil; the sequence is NTAMDAQEALARRLERAKKLQEQKEKDMLEK. A compositionally biased stretch (basic and acidic residues) spans 200-227; it reads LARRLERAKKLQEQKEKDMLEKWQHQEK.

Belongs to the RSRC2 family.

This chain is Arginine/serine-rich coiled-coil protein 2 (rsrc2), found in Danio rerio (Zebrafish).